Reading from the N-terminus, the 488-residue chain is Katanin p60 ATPase-containing subunit A-like 1 (488 aa).

Positions 84 to 184 are disordered; that stretch reads FPNPVPEEGP…EQKKFDGTGY (101 aa). The segment covering 144-167 has biased composition (basic and acidic residues); that stretch reads KPDRPNTRDGRGNKAKEEKSKRNA. 246–253 serves as a coordination point for ATP; it reads GPPGTGKT.

It belongs to the AAA ATPase family. Katanin p60 subunit A1 subfamily. A-like 1 sub-subfamily.

The protein localises to the cytoplasm. Its subcellular location is the cytoskeleton. The protein resides in the spindle pole. It is found in the spindle. The enzyme catalyses n ATP + n H2O + a microtubule = n ADP + n phosphate + (n+1) alpha/beta tubulin heterodimers.. Its function is as follows. Regulates microtubule dynamics in Sertoli cells, a process that is essential for spermiogenesis and male fertility. Severs microtubules in an ATP-dependent manner, promoting rapid reorganization of cellular microtubule arrays. This is Katanin p60 ATPase-containing subunit A-like 1 (katnal1) from Danio rerio (Zebrafish).